The primary structure comprises 800 residues: MSSGDSNLKRRRGGNTGQSSKSYNTWTDYEEDLEESGEFNQSIKKTTNTSSATLTSSEEKGSLLDYSKRCILKQDNKSRPIWVCPDGHIFLETFSAIYKQASDFLVAIAEPVCRPQNIHEYQLTPYSLYAAVSVGLETNDIITVLGRLSKLALPKEVEQFVRQCTQSYGKVKLVLQKNKYFVESAYPEVLEFLLKDSSIATARIKPTLEESVVDPKTGFIINKEVVTGAQISGGLQANQSLDPVLKNDALSNLLEEEEEDTVNNSDQHFHSFEIDPQQVEEVKKRCIQLDYPVLEEYDFRNDTVNPNLNIDLKPTTMIRPYQEKSLSKMFGNGRARSGIIVLPCGAGKSLSGITAACTVKKSILVLCTSAVSVEQWKYQFKLWSNIEERQISKFTSDNKEKISNVAGVTITTYTMVAFGGRRSAESLKIMNEITNREWGLVLLDEVHVVPAAMFRKVLTVTKAHCKLGLTATLLREDEKIQDLNFLIGPKLYEANWLDLQKAGFLANVSCSEVWCPMTAEFYKEYLINDSQGKKKLLYTMNPNKFRACEYLIRFHEQRGDKIIVFSDNVYALQKYAKGLGRYFIYGPTSGHERMSILSKFQHDPTVRTIFISKVGDTSIDIPEATVIIQVSSHYGSRRQEAQRLGRILRPKPKSDGLYNAFFYSLVSKDTQEMYYSTKRQQFLIDQGYSFKVISELPGIDQEVNLKYSSKQDQLDLLAQVLGEGEDSGKNEILEEDFDDITRGAKKSKSSAPTVSRTTGGSTRALSGGNDMNYMEYQAPAIYKSIPTQHALFKQRAKNKQ.

Residues 1–27 (MSSGDSNLKRRRGGNTGQSSKSYNTWT) are disordered. Over residues 17 to 27 (GQSSKSYNTWT) the composition is skewed to polar residues. The 163-residue stretch at 329–491 (MFGNGRARSG…DLNFLIGPKL (163 aa)) folds into the Helicase ATP-binding domain. 342–349 (LPCGAGKS) provides a ligand contact to ATP. Residues 444-447 (DEVH) carry the DEVH box motif. The 159-residue stretch at 546-704 (RACEYLIRFH…ELPGIDQEVN (159 aa)) folds into the Helicase C-terminal domain. A disordered region spans residues 743–769 (GAKKSKSSAPTVSRTTGGSTRALSGGN). Positions 749–764 (SSAPTVSRTTGGSTRA) are enriched in polar residues.

This sequence belongs to the helicase family. RAD25/XPB subfamily. As to quaternary structure, component of the 7-subunit TFIIH core complex composed of XPB/repB, XPD/repD, gtf2h1, gtf2h2, gtf2h3, gtf2h4 and gtf2h5, which is active in NER. The core complex associates with the 3-subunit CDK-activating kinase (CAK) module composed of cycH/cyclin H, cdk7 and mnat1 to form the 10-subunit holoenzyme (holo-TFIIH) active in transcription.

The protein localises to the nucleus. The catalysed reaction is Couples ATP hydrolysis with the unwinding of duplex DNA by translocating in the 3'-5' direction.. The enzyme catalyses ATP + H2O = ADP + phosphate + H(+). ATP-dependent 3'-5' DNA helicase/translocase; binds dsDNA rather than ssDNA, unzipping it in a translocase rather than classical helicase activity. Component of the general transcription and DNA repair factor IIH (TFIIH) core complex. When complexed to CDK-activating kinase (CAK), involved in RNA transcription by RNA polymerase II. The ATPase activity of XPB/ERCC3, but not its helicase activity, is required for DNA opening; it may wrap around the damaged DNA wedging it open, causing localized melting and twisting that allows XPD/ERCC2 helicase to anchor. The ATP-dependent helicase activity of XPB/ERCC3 may be required for promoter escape. Also involved in transcription-coupled nucleotide excision repair (NER) of damaged DNA. In NER, TFIIH acts by opening DNA around the lesion to allow the excision of the damaged oligonucleotide and its replacement by a new DNA fragment. The structure of the TFIIH transcription complex differs from the NER-TFIIH complex. In Dictyostelium discoideum (Social amoeba), this protein is General transcription and DNA repair factor IIH helicase/translocase subunit XPB.